The primary structure comprises 332 residues: Solute carrier family 25 member 16 (332 aa).

Solcar repeat units follow at residues 34–120, 128–216, and 238–328; these read FYWL…YKTF, SGHV…LKSV, and LKTH…MKQF. 6 helical membrane-spanning segments follow: residues 37–57, 88–108, 134–154, 191–211, 244–264, and 299–319; these read LRSF…VAPL, GYLG…PYGA, LMAG…LDVV, GLMP…FTFG, LLCG…FDVT, and GLYR…AVAF.

Belongs to the mitochondrial carrier (TC 2.A.29) family.

It is found in the mitochondrion inner membrane. May be involved in the transport of coenzyme A in the mitochondrial matrix. Very little is known about the physiological function of this carrier. This chain is Solute carrier family 25 member 16, found in Mus musculus (Mouse).